Consider the following 211-residue polypeptide: ATP phosphoribosyltransferase (211 aa).

Belongs to the ATP phosphoribosyltransferase family. Short subfamily. As to quaternary structure, heteromultimer composed of HisG and HisZ subunits.

The protein localises to the cytoplasm. The enzyme catalyses 1-(5-phospho-beta-D-ribosyl)-ATP + diphosphate = 5-phospho-alpha-D-ribose 1-diphosphate + ATP. It functions in the pathway amino-acid biosynthesis; L-histidine biosynthesis; L-histidine from 5-phospho-alpha-D-ribose 1-diphosphate: step 1/9. Functionally, catalyzes the condensation of ATP and 5-phosphoribose 1-diphosphate to form N'-(5'-phosphoribosyl)-ATP (PR-ATP). Has a crucial role in the pathway because the rate of histidine biosynthesis seems to be controlled primarily by regulation of HisG enzymatic activity. In Bacillus thuringiensis subsp. konkukian (strain 97-27), this protein is ATP phosphoribosyltransferase.